The following is a 281-amino-acid chain: Energy-coupling factor transporter ATP-binding protein EcfA1 (281 aa).

Residues 6-245 (IKSEDLVFKY…VEKIKSIGLD (240 aa)) form the ABC transporter domain. 44-51 (GHNGSGKS) contacts ATP.

The protein belongs to the ABC transporter superfamily. Energy-coupling factor EcfA family. Forms a stable energy-coupling factor (ECF) transporter complex composed of 2 membrane-embedded substrate-binding proteins (S component), 2 ATP-binding proteins (A component) and 2 transmembrane proteins (T component).

It is found in the cell membrane. Functionally, ATP-binding (A) component of a common energy-coupling factor (ECF) ABC-transporter complex. Unlike classic ABC transporters this ECF transporter provides the energy necessary to transport a number of different substrates. This is Energy-coupling factor transporter ATP-binding protein EcfA1 from Clostridium perfringens (strain ATCC 13124 / DSM 756 / JCM 1290 / NCIMB 6125 / NCTC 8237 / Type A).